Consider the following 210-residue polypeptide: Glycerol-3-phosphate acyltransferase (210 aa).

Transmembrane regions (helical) follow at residues 4 to 24 (LIVAVVAYLIGSVSFAVIVSA), 52 to 72 (AAILTLIGDAFKGWLAVWLTG), 82 to 102 (DTSVAIAAIAVFLGHLYPVFF), 118 to 138 (LAINPILGIATLLTWLIVAFF), and 159 to 179 (FLFGANVIALSIVAMSALLIW).

This sequence belongs to the PlsY family. Probably interacts with PlsX.

The protein resides in the cell inner membrane. The catalysed reaction is an acyl phosphate + sn-glycerol 3-phosphate = a 1-acyl-sn-glycero-3-phosphate + phosphate. It functions in the pathway lipid metabolism; phospholipid metabolism. Its function is as follows. Catalyzes the transfer of an acyl group from acyl-phosphate (acyl-PO(4)) to glycerol-3-phosphate (G3P) to form lysophosphatidic acid (LPA). This enzyme utilizes acyl-phosphate as fatty acyl donor, but not acyl-CoA or acyl-ACP. In Paraburkholderia phymatum (strain DSM 17167 / CIP 108236 / LMG 21445 / STM815) (Burkholderia phymatum), this protein is Glycerol-3-phosphate acyltransferase.